Reading from the N-terminus, the 297-residue chain is Pyrroline-5-carboxylate reductase 1 (297 aa).

This sequence belongs to the pyrroline-5-carboxylate reductase family.

The protein localises to the cytoplasm. It catalyses the reaction L-proline + NADP(+) = (S)-1-pyrroline-5-carboxylate + NADPH + 2 H(+). It carries out the reaction L-proline + NAD(+) = (S)-1-pyrroline-5-carboxylate + NADH + 2 H(+). It functions in the pathway amino-acid biosynthesis; L-proline biosynthesis; L-proline from L-glutamate 5-semialdehyde: step 1/1. Catalyzes the reduction of 1-pyrroline-5-carboxylate (PCA) to L-proline. In Bacillus spizizenii (strain ATCC 23059 / NRRL B-14472 / W23) (Bacillus subtilis subsp. spizizenii), this protein is Pyrroline-5-carboxylate reductase 1 (proH).